The sequence spans 935 residues: C-1-tetrahydrofolate synthase, cytoplasmic (935 aa).

Met-1 is modified (N-acetylmethionine). A methylenetetrahydrofolate dehydrogenase and methenyltetrahydrofolate cyclohydrolase (D/C) domain region spans residues Ala-2–Ala-291. Residues Tyr-52 to Lys-56 and Val-99 to Leu-101 contribute to the substrate site. Lys-56 is an active-site residue. Residues Gly-172–Ser-174 and Ser-197 each bind NADP(+). Pro-272–Gly-276 serves as a coordination point for substrate. A formyltetrahydrofolate synthetase domain region spans residues Leu-310 to Phe-935. Residue Ser-318 is modified to Phosphoserine. Thr-380 to Ser-387 contacts ATP. 2 positions are modified to phosphoserine: Ser-413 and Ser-490.

It in the N-terminal section; belongs to the tetrahydrofolate dehydrogenase/cyclohydrolase family. This sequence in the C-terminal section; belongs to the formate--tetrahydrofolate ligase family. As to quaternary structure, homodimer.

The protein localises to the cytoplasm. The enzyme catalyses (6R)-5,10-methylene-5,6,7,8-tetrahydrofolate + NADP(+) = (6R)-5,10-methenyltetrahydrofolate + NADPH. It catalyses the reaction (6R)-5,10-methenyltetrahydrofolate + H2O = (6R)-10-formyltetrahydrofolate + H(+). It carries out the reaction (6S)-5,6,7,8-tetrahydrofolate + formate + ATP = (6R)-10-formyltetrahydrofolate + ADP + phosphate. It participates in one-carbon metabolism; tetrahydrofolate interconversion. Its function is as follows. Trifunctional enzyme that catalyzes the interconversion of three forms of one-carbon-substituted tetrahydrofolate: (6R)-5,10-methylene-5,6,7,8-tetrahydrofolate, 5,10-methenyltetrahydrofolate and (6S)-10-formyltetrahydrofolate. These derivatives of tetrahydrofolate are differentially required in nucleotide and amino acid biosynthesis, (6S)-10-formyltetrahydrofolate being required for purine biosynthesis while (6R)-5,10-methylene-5,6,7,8-tetrahydrofolate is used for serine and methionine biosynthesis for instance. In Pongo abelii (Sumatran orangutan), this protein is C-1-tetrahydrofolate synthase, cytoplasmic (MTHFD1).